We begin with the raw amino-acid sequence, 407 residues long: Biflaviolin synthase CYP158A1 (407 aa).

The span at M1–Q11 shows a compositional bias: polar residues. The segment at M1–P20 is disordered. Residues R92, Y199, and H290 to R291 each bind flaviolin. C356 serves as a coordination point for heme.

Belongs to the cytochrome P450 family. Requires heme as cofactor.

The catalysed reaction is 2 flaviolin + 2 reduced [2Fe-2S]-[ferredoxin] + O2 + H(+) = 3,3'-biflaviolin + 2 oxidized [2Fe-2S]-[ferredoxin] + 2 H2O. It catalyses the reaction 2 flaviolin + 2 reduced [2Fe-2S]-[ferredoxin] + O2 + H(+) = 3,8'-biflaviolin + 2 oxidized [2Fe-2S]-[ferredoxin] + 2 H2O. It participates in pigment biosynthesis. In terms of biological role, catalyzes oxidative C-C coupling reaction to polymerize flaviolin and form highly conjugated pigments which protect the soil bacterium from deleterious effects of UV irradiation (two isomers of biflaviolin and one triflaviolin). The polypeptide is Biflaviolin synthase CYP158A1 (Streptomyces coelicolor (strain ATCC BAA-471 / A3(2) / M145)).